Reading from the N-terminus, the 138-residue chain is Basic phospholipase A2 BP-I (138 aa).

An N-terminal signal peptide occupies residues 1–16 (MRTLWIMAVLLLGVDG). Intrachain disulfides connect Cys-42/Cys-132, Cys-44/Cys-60, Cys-59/Cys-112, Cys-65/Cys-138, Cys-66/Cys-105, Cys-73/Cys-98, and Cys-91/Cys-103. 2 residues coordinate Ca(2+): Gly-45 and Gly-47. His-63 is an active-site residue. The active site involves Asp-106.

Belongs to the phospholipase A2 family. Group II subfamily. K49 sub-subfamily. Ca(2+) serves as cofactor. Expressed by the venom gland.

It localises to the secreted. It catalyses the reaction a 1,2-diacyl-sn-glycero-3-phosphocholine + H2O = a 1-acyl-sn-glycero-3-phosphocholine + a fatty acid + H(+). In terms of biological role, snake venom phospholipase A2 (PLA2) that has strong myotoxic activity with a low phospholipase A2 activity. PLA2 catalyzes the calcium-dependent hydrolysis of the 2-acyl groups in 3-sn-phosphoglycerides. The polypeptide is Basic phospholipase A2 BP-I (Protobothrops flavoviridis (Habu)).